Here is a 175-residue protein sequence, read N- to C-terminus: Riboflavin kinase (175 aa).

Position 54–59 (54–59) interacts with CDP; the sequence is GLGEGK. Residues threonine 83 and asparagine 85 each contribute to the Mg(2+) site. FMN contacts are provided by threonine 142 and glutamate 150. 155-158 is a CDP binding site; the sequence is FHLR.

Belongs to the archaeal riboflavin kinase family. Mg(2+) is required as a cofactor.

The catalysed reaction is riboflavin + CTP = CDP + FMN + H(+). The protein operates within cofactor biosynthesis; FMN biosynthesis; FMN from riboflavin (CTP route): step 1/1. Functionally, catalyzes the CTP-dependent phosphorylation of riboflavin (vitamin B2) to form flavin mononucleotide (FMN). The protein is Riboflavin kinase of Saccharolobus solfataricus (strain ATCC 35092 / DSM 1617 / JCM 11322 / P2) (Sulfolobus solfataricus).